A 122-amino-acid chain; its full sequence is Large ribosomal subunit protein uL14 (122 aa).

The protein belongs to the universal ribosomal protein uL14 family. As to quaternary structure, part of the 50S ribosomal subunit. Forms a cluster with proteins L3 and L19. In the 70S ribosome, L14 and L19 interact and together make contacts with the 16S rRNA in bridges B5 and B8.

In terms of biological role, binds to 23S rRNA. Forms part of two intersubunit bridges in the 70S ribosome. The polypeptide is Large ribosomal subunit protein uL14 (Rhodococcus jostii (strain RHA1)).